The sequence spans 447 residues: Mannose/glucose-specific lectin (447 aa).

Jacalin-type lectin domains are found at residues 5 to 148 (MISV…FVKP), 153 to 294 (TISF…YVKP), and 300 to 443 (SISI…FVKP).

Belongs to the jacalin lectin family. Expressed in seeds (at protein level).

Its activity is regulated as follows. Hemagglutinating activity is slightly inhibited by alpha-methyl-D-mannopyranoside. In terms of biological role, D-mannose/D-glucose-binding lectin that also binds derivatives N-acetyl-D-glucosamine and alpha-methyl-D-mannopyranoside. Does not bind D-galactose, L-Rhamnose, D-fructose, lactose or glycoproteins fetiun and mucin. Shows agglutinating activity towards human and rabbit erythrocytes. Also displays antimicrobial activity against L.infantum. The chain is Mannose/glucose-specific lectin from Parkia pendula (Inga pendula).